We begin with the raw amino-acid sequence, 541 residues long: Cytosolic phospholipase A2 gamma (541 aa).

The region spanning 1–541 (MGSSEVSIIP…KDSARSCCLA (541 aa)) is the PLA2c domain. Serine 82 functions as the Nucleophile in the catalytic mechanism. A required for lipid droplet localization region spans residues 260–292 (LTLKGLWRRAVANAKSIGHLIFARLLRLQESSQ). Phosphoserine is present on serine 337. Aspartate 385 acts as the Proton acceptor in catalysis. Residue cysteine 538 is modified to Cysteine methyl ester. Cysteine 538 is lipidated: S-farnesyl cysteine. The propeptide at 539–541 (CLA) is removed in mature form.

In terms of assembly, (Microbial infection) Interacts with HCV non-structural protein 4B/NS4B; this interaction likely initiates the recruitment of replication complexes to lipid droplets. Highly expressed in heart and skeletal muscle.

The protein localises to the cell membrane. Its subcellular location is the endoplasmic reticulum membrane. It is found in the mitochondrion membrane. It localises to the lipid droplet. It carries out the reaction a 1,2-diacyl-sn-glycero-3-phosphocholine + H2O = a 1-acyl-sn-glycero-3-phosphocholine + a fatty acid + H(+). The catalysed reaction is a 1-O-alkyl-2-acyl-sn-glycero-3-phosphocholine + H2O = a 1-O-alkyl-sn-glycero-3-phosphocholine + a fatty acid + H(+). It catalyses the reaction 1,2-dihexadecanoyl-sn-glycero-3-phosphocholine + H2O = 1-hexadecanoyl-sn-glycero-3-phosphocholine + hexadecanoate + H(+). The enzyme catalyses 1-hexadecanoyl-2-(9Z-octadecenoyl)-sn-glycero-3-phosphocholine + H2O = 1-hexadecanoyl-sn-glycero-3-phosphocholine + (9Z)-octadecenoate + H(+). It carries out the reaction 1-hexadecanoyl-2-(9Z,12Z-octadecadienoyl)-sn-glycero-3-phosphocholine + H2O = (9Z,12Z)-octadecadienoate + 1-hexadecanoyl-sn-glycero-3-phosphocholine + H(+). The catalysed reaction is 1-hexadecanoyl-2-(5Z,8Z,11Z,14Z-eicosatetraenoyl)-sn-glycero-3-phosphocholine + H2O = 1-hexadecanoyl-sn-glycero-3-phosphocholine + (5Z,8Z,11Z,14Z)-eicosatetraenoate + H(+). It catalyses the reaction 1-O-hexadecyl-2-(5Z,8Z,11Z,14Z)-eicosatetraenoyl-sn-glycero-3-phosphocholine + H2O = 1-O-hexadecyl-sn-glycero-3-phosphocholine + (5Z,8Z,11Z,14Z)-eicosatetraenoate + H(+). The enzyme catalyses 1-hexadecanoyl-2-(5Z,8Z,11Z,14Z-eicosatetraenoyl)-sn-glycero-3-phosphocholine + H2O = 2-(5Z,8Z,11Z,14Z)-eicosatetraenoyl-sn-glycero-3-phosphocholine + hexadecanoate + H(+). It carries out the reaction a 1-acyl-sn-glycero-3-phosphocholine + H2O = sn-glycerol 3-phosphocholine + a fatty acid + H(+). The catalysed reaction is 1-hexadecanoyl-sn-glycero-3-phosphocholine + H2O = sn-glycerol 3-phosphocholine + hexadecanoate + H(+). It catalyses the reaction 2 1-hexadecanoyl-sn-glycero-3-phosphocholine = 1,2-dihexadecanoyl-sn-glycero-3-phosphocholine + sn-glycerol 3-phosphocholine. The enzyme catalyses 1-hexadecanoyl-sn-glycero-3-phosphoethanolamine + 1-hexadecanoyl-sn-glycero-3-phosphocholine = 1,2-dihexadecanoyl-sn-glycero-3-phosphoethanolamine + sn-glycerol 3-phosphocholine. It carries out the reaction 1-hexadecanoyl-sn-glycero-3-phosphoethanolamine + 1-hexadecanoyl-sn-glycero-3-phosphocholine = sn-glycero-3-phosphoethanolamine + 1,2-dihexadecanoyl-sn-glycero-3-phosphocholine. The catalysed reaction is 2 1-hexadecanoyl-sn-glycero-3-phosphoethanolamine = 1,2-dihexadecanoyl-sn-glycero-3-phosphoethanolamine + sn-glycero-3-phosphoethanolamine. It catalyses the reaction 1-O-hexadecyl-sn-glycero-3-phosphocholine + 1-hexadecanoyl-sn-glycero-3-phosphocholine = 1-O-hexadecyl-2-hexadecanoyl-sn-glycero-3-phosphocholine + sn-glycerol 3-phosphocholine. The enzyme catalyses a 1-O-(1Z-alkenyl)-sn-glycero-3-phosphoethanolamine + 1-hexadecanoyl-sn-glycero-3-phosphocholine = 1-O-(1Z)-alkenyl-2-hexadecanoyl-sn-glycero-3-phosphoethanolamine + sn-glycerol 3-phosphocholine. It carries out the reaction 1-O-hexadecyl-sn-glycero-3-phosphocholine + 1-hexadecanoyl-sn-glycero-3-phosphoethanolamine = 1-O-hexadecyl-2-hexadecanoyl-sn-glycero-3-phosphocholine + sn-glycero-3-phosphoethanolamine. The catalysed reaction is 1-octadecanoyl-2-(5Z,8Z,11Z,14Z)-eicosatetraenoyl-sn-glycero-3-phosphoethanolamine + 1-hexadecanoyl-sn-glycero-3-phosphocholine = 1-octadecanoyl-sn-glycero-3-phosphoethanolamine + 1-hexadecanoyl-2-(5Z,8Z,11Z,14Z-eicosatetraenoyl)-sn-glycero-3-phosphocholine. It catalyses the reaction 1-octadecanoyl-2-(5Z,8Z,11Z,14Z)-eicosatetraenoyl-sn-glycero-3-phosphoethanolamine + 1-O-hexadecyl-sn-glycero-3-phosphocholine = 1-octadecanoyl-sn-glycero-3-phosphoethanolamine + 1-O-hexadecyl-2-(5Z,8Z,11Z,14Z)-eicosatetraenoyl-sn-glycero-3-phosphocholine. The enzyme catalyses 1-hexadecanoyl-2-(9Z,12Z-octadecadienoyl)-sn-glycero-3-phosphocholine + a 1-O-(1Z-alkenyl)-sn-glycero-3-phosphoethanolamine = 1-O-(1Z-alkenyl)-2-(9Z,12Z-octadecadienoyl)-sn-glycero-3-phosphoethanolamine + 1-hexadecanoyl-sn-glycero-3-phosphocholine. It carries out the reaction 1-hexadecanoyl-2-(5Z,8Z,11Z,14Z-eicosatetraenoyl)-sn-glycero-3-phosphocholine + a 1-O-(1Z-alkenyl)-sn-glycero-3-phosphoethanolamine = 1-O-(1Z)-alkenyl-2-(5Z,8Z,11Z,14Z)-eicosatetraenoyl-sn-glycero-3-phosphoethanolamine + 1-hexadecanoyl-sn-glycero-3-phosphocholine. Not regulated by calcium, coenzyme A or ATP. Lysophospholipase activity is inhibited by palmitoyl-CoA. Lysophospholipase and O-acyltransferase activities are inhibited by methylarachidonoylfluorophosphonate. Lysophospholipase activity is inhibited by phosphatidate or lysophosphatidate. O-acyltransferase activity is up-regulated at low concentration (10-20 uM) of phosphatidate or lysophosphatidate, but inhibited at higher concentrations. Calcium-independent phospholipase, lysophospholipase and O-acyltransferase involved in phospholipid remodeling with implications in endoplasmic reticulum membrane homeostasis and lipid droplet biogenesis. Preferentially hydrolyzes the ester bond of the fatty acyl group attached at the sn-2 position of phospholipids with choline and ethanolamine head groups, producing lysophospholipids that are used in deacylation-reacylation cycles. Transfers the sn-1 fatty acyl from one lysophospholipid molecule to the sn-2 position of another lysophospholipid to form diacyl, alkylacyl and alkenylacyl glycerophospholipids. Cleaves ester bonds but not alkyl or alkenyl ether bonds at sn-1 position of lysophospholipids. Catalyzes sn-2 fatty acyl transfer from phospholipids to the sn-2 position of 1-O-alkyl or 1-O-alkenyl lysophospholipids with lower efficiency. In response to dietary fatty acids, may play a role in the formation of nascent lipid droplets from the endoplasmic reticulum likely by regulating the phospholipid composition of these organelles. Its function is as follows. (Microbial infection) May play a role in replication and assembly of human hepatitis C virus (HCV). In response to HCV infection, promotes remodeling of host endoplasmic reticulum membranes to form organelle-like structures called membranous web, where HCV replication occur. Can further mediate translocation of replication complexes to lipid droplets to enable virion assembly. Functionally, (Microbial infection) May facilitate human T-lymphotropic virus type 1 (HTLV-1) infection by promoting leukotriene B4 (LTB4) biosynthesis. LTB4 acts as a chemoattractant for HTLV-1-infected CD4-positive T cells and favors cell to cell viral transmission. This chain is Cytosolic phospholipase A2 gamma (PLA2G4C), found in Homo sapiens (Human).